Here is a 500-residue protein sequence, read N- to C-terminus: Cytochrome P450 2D27 (500 aa).

Cys446 provides a ligand contact to heme.

Belongs to the cytochrome P450 family. The cofactor is heme. In terms of tissue distribution, expressed in liver, but not in kidney, small intestine, and brain.

It is found in the endoplasmic reticulum membrane. It localises to the microsome membrane. Functionally, has bufuralol 1'-hydroxylase and debrisoquine 4-hydroxylase activities. The sequence is that of Cytochrome P450 2D27 (CYP2D27) from Mesocricetus auratus (Golden hamster).